The sequence spans 281 residues: Tetraspanin-5 (281 aa).

Residues 1–7 (MNRMSNT) lie on the Cytoplasmic side of the membrane. A helical membrane pass occupies residues 8-28 (VIGFLNILTLISSIVLLGSAL). Residues 29-44 (WMGRSKTTCEHFLQKP) are Extracellular-facing. A helical membrane pass occupies residues 45–65 (LLILGLAILILSVAGLVGACC). At 66 to 74 (DVAWVLWVY) the chain is on the cytoplasmic side. Residues 75-95 (LFFMVFIIVALMGLTLFGFIV) traverse the membrane as a helical segment. The Extracellular segment spans residues 96-221 (TSHSGGVVVD…TVRRDWHKLS (126 aa)). The chain crosses the membrane as a helical span at residues 222 to 242 (LVNVIVVIFLIAVYCVGCCAF). Residues 243 to 281 (KNAKRPQHYGFPYGRYGMSKSRPGWEQSWSRWWHGRDRY) are Cytoplasmic-facing.

This sequence belongs to the tetraspanin (TM4SF) family.

It is found in the membrane. In terms of biological role, may be involved in the regulation of cell differentiation. This is Tetraspanin-5 (TET5) from Arabidopsis thaliana (Mouse-ear cress).